Reading from the N-terminus, the 316-residue chain is 4-diphosphocytidyl-2-C-methyl-D-erythritol kinase (316 aa).

Lys-23 is a catalytic residue. Residue 108–118 (PVAGGMAGGSA) participates in ATP binding. The active site involves Asp-150.

The protein belongs to the GHMP kinase family. IspE subfamily.

The catalysed reaction is 4-CDP-2-C-methyl-D-erythritol + ATP = 4-CDP-2-C-methyl-D-erythritol 2-phosphate + ADP + H(+). It participates in isoprenoid biosynthesis; isopentenyl diphosphate biosynthesis via DXP pathway; isopentenyl diphosphate from 1-deoxy-D-xylulose 5-phosphate: step 3/6. Its function is as follows. Catalyzes the phosphorylation of the position 2 hydroxy group of 4-diphosphocytidyl-2C-methyl-D-erythritol. This Mycolicibacterium paratuberculosis (strain ATCC BAA-968 / K-10) (Mycobacterium paratuberculosis) protein is 4-diphosphocytidyl-2-C-methyl-D-erythritol kinase.